A 719-amino-acid chain; its full sequence is MGNGESQLSSVPAQKLGWFIQEYLKPYEECQTLIDEMVNTICDVLQEPEQFPLVQGVAIGGSYGRKTVLRGNSDGTLVLFFSDLKQFQDQKRSQRDILDKTGDKLKFCLFTKWLKNNFEIQKSLDGFTIQVFTKNQRISFEVLAAFNALSLNDNPSPWIYRELKRSLDKTNASPGEFAVCFTELQQKFFDNRPGKLKDLILLIKHWHQQCQKKIKDLPSLSPYALELLTVYAWEQGCRKDNFDIAEGVRTVLELIKCQEKLCIYWMVNYNFEDETIRNILLHQLQSARPVILDPVDPTNNVSGDKICWQWLKKEAQTWLTSPNLDNELPAPSWNVLPAPLFTTPGHLLDKFIKEFLQPNKCFLEQIDSAVNIIRTFLKENCFRQSTAKIQIVRGGSTAKGTALKTGSDADLVVFHNSLKSYTSQKNERHKIVKEIHEQLKAFWREKEEELEVSFEPPKWKAPRVLSFSLKSKVLNESVSFDVLPAFNALGQLSSGSTPSPEVYAGLIDLYKSSDLPGGEFSTCFTVLQRNFIRSRPTKLKDLIRLVKHWYKECERKLKPKGSLPPKYALELLTIYAWEQGSGVPDFDTAEGFRTVLELVTQYQQLCIFWKVNYNFEDETVRKFLLSQLQKTRPVILDPAEPTGDVGGGDRWCWHLLAKEAKEWLSSPCFKDGTGNPIPPWKVPTMQTPGSCGARIHPIVNEMFSSRSHRILNNNSKRNF.

G2 is lipidated: N-myristoyl glycine. OAS domain stretches follow at residues 11-335 (VPAQ…SWNV) and 343-683 (TPGH…WKVP). The residue at position 378 (K378) is an N6-acetyllysine. Position 396 (S396) interacts with ATP. Mg(2+) is bound by residues D408, D410, and D481. Residues R544 and K547 each contribute to the ATP site.

Belongs to the 2-5A synthase family. Homodimer. Mg(2+) is required as a cofactor. Myristoylation is not essential for its activity. Post-translationally, glycosylated. Glycosylation is essential for its activity.

It localises to the cytoplasm. Its subcellular location is the perinuclear region. It catalyses the reaction 3 ATP = 5'-triphosphoadenylyl-(2'-&gt;5')-adenylyl-(2'-&gt;5')-adenosine + 2 diphosphate. Produced as a latent enzyme which is activated by double stranded RNA (dsRNA) generated during the course of viral infection. The dsRNA activator must be at least 15 nucleotides long, and no modification of the 2'-hydroxyl group is tolerated. ssRNA or dsDNA do not act as activators. Strongly inhibited by copper, iron and zinc ions. Partially inhibited by cobalt and nickel ions. In terms of biological role, interferon-induced, dsRNA-activated antiviral enzyme which plays a critical role in cellular innate antiviral response. Activated by detection of double stranded RNA (dsRNA): polymerizes higher oligomers of 2'-5'-oligoadenylates (2-5A) from ATP which then bind to the inactive monomeric form of ribonuclease L (RNASEL) leading to its dimerization and subsequent activation. Activation of RNASEL leads to degradation of cellular as well as viral RNA, resulting in the inhibition of protein synthesis, thus terminating viral replication. Can mediate the antiviral effect via the classical RNASEL-dependent pathway or an alternative antiviral pathway independent of RNASEL. In addition, it may also play a role in other cellular processes such as apoptosis, cell growth, differentiation and gene regulation. May act as a negative regulator of lactation, stopping lactation in virally infected mammary gland lobules, thereby preventing transmission of viruses to neonates. Non-infected lobules would not be affected, allowing efficient pup feeding during infection. In Homo sapiens (Human), this protein is 2'-5'-oligoadenylate synthase 2.